Here is a 1090-residue protein sequence, read N- to C-terminus: UPF0507 protein SCRG_01893 (1090 aa).

The VPS9 domain occupies 289–436 (FSVNQLLTDF…FEDFNKNTGN (148 aa)).

The protein belongs to the UPF0507 family.

The chain is UPF0507 protein SCRG_01893 from Saccharomyces cerevisiae (strain RM11-1a) (Baker's yeast).